Here is a 380-residue protein sequence, read N- to C-terminus: Acid phosphatase-like protein XcAP-3 (380 aa).

A signal peptide spans 1 to 19; that stretch reads MKATILLFLVLAVVQLSTA. Cystine bridges form between cysteine 147–cysteine 374, cysteine 167–cysteine 221, and cysteine 347–cysteine 351.

It belongs to the histidine acid phosphatase family.

The protein localises to the secreted. In terms of biological role, probably modulates blood feeding of fleas on vertebrate species by binding and sequestering different mediators involved in the host response. Binds histamine. Binds leukotriene C4. Does not bind serotonin, adrenaline, noradrenaline, leukotriene B4, leukotriene D4, leukotriene E4, ADP, and stable analogs of thromboxane A2: U-46619 and cTXA2. This Xenopsylla cheopis (Oriental rat flea) protein is Acid phosphatase-like protein XcAP-3.